A 328-amino-acid chain; its full sequence is Alanine racemase (328 aa).

Lys33 serves as the catalytic Proton acceptor; specific for D-alanine. Lys33 is subject to N6-(pyridoxal phosphate)lysine. Substrate is bound at residue Arg118. The active-site Proton acceptor; specific for L-alanine is Tyr237. Met283 is a substrate binding site.

It belongs to the alanine racemase family. Pyridoxal 5'-phosphate serves as cofactor.

It carries out the reaction L-alanine = D-alanine. Its pathway is amino-acid biosynthesis; D-alanine biosynthesis; D-alanine from L-alanine: step 1/1. Its function is as follows. Catalyzes the interconversion of L-alanine and D-alanine. May also act on other amino acids. In Campylobacter jejuni subsp. jejuni serotype O:2 (strain ATCC 700819 / NCTC 11168), this protein is Alanine racemase (alr).